We begin with the raw amino-acid sequence, 550 residues long: Lariat debranching enzyme (550 aa).

A divalent metal cation contacts are provided by Cys8 and His10. Ser28 is subject to Phosphoserine. A divalent metal cation contacts are provided by Asp39 and Asn84. The segment at 124–154 (SGIFKSHDYRKGHFECPPYNSSTIRSIYHVR) is lariat recognition loop. Lys128 carries the N6-acetyllysine modification. His174, His226, and His228 together coordinate a divalent metal cation. A disordered region spans residues 390–550 (EHHQCGEYEQ…AVDDGDASAE (161 aa)). The segment covering 416–426 (NTDTSALSSIN) has biased composition (polar residues). A compositionally biased stretch (acidic residues) spans 430–445 (IMLDEEEEEEEEEEEA). The segment covering 450-483 (SDMNTPSVEPASDQASDLSTSFSDIRNLPSSMFV) has biased composition (polar residues). Phosphoserine is present on residues Ser470, Ser480, Ser484, Ser485, Ser489, Ser491, Ser494, Ser505, and Ser520. The span at 498 to 528 (KCGETVESGDEKDLAKFPLKRLSDEHEPEQR) shows a compositional bias: basic and acidic residues.

Belongs to the lariat debranching enzyme family. Requires Fe(2+) as cofactor. Zn(2+) serves as cofactor. It depends on Mn(2+) as a cofactor.

The protein resides in the nucleus. Its activity is regulated as follows. Active in presence of diverse metals including Fe(2+), Zn(2+), Mn(2+). Also activated by Ca(2+). Binds two metal cations in two adjacent alpha and beta metal-binding pockets. Its function is as follows. Cleaves the 2'-5' phosphodiester linkage at the branch point of excised lariat intron RNA and converts them into linear molecules that can be subsequently degraded, thereby facilitating ribonucleotide turnover. Linked to its role in pre-mRNA processing mechanism, may also participate in retrovirus replication and have an antiviral cell-intrinsic defense function. This chain is Lariat debranching enzyme (Dbr1), found in Mus musculus (Mouse).